Here is a 127-residue protein sequence, read N- to C-terminus: Protein ApaG (127 aa).

The 125-residue stretch at 3–127 (EGKKYQINIS…FTLAMPRVLH (125 aa)) folds into the ApaG domain.

This chain is Protein ApaG, found in Thiobacillus denitrificans (strain ATCC 25259 / T1).